A 288-amino-acid chain; its full sequence is POU domain class 2-associating factor 2 (288 aa).

The OCA domain maps to 10–32 (KRVYQGVRVKHTVKDLLAEKRSG). Disordered stretches follow at residues 24-52 (DLLAEKRSGQTSNSRLNGSVSSSQSPFVQ) and 247-274 (PPKVGPLSPDEEADTGSLHDPSPWVKED). Residues 35–48 (SNSRLNGSVSSSQS) are compositionally biased toward low complexity.

It belongs to the POU2AF family. As to quaternary structure, interacts with POU2F3 (via the POU domain) in a DNA-dependent manner; this interaction recruits POU2AF2 to chromatin and increases POU2F3 transactivation activity. As to expression, expressed in tuft cells of colon mucosa, as well as in small intestine and thymus.

Its subcellular location is the cytoplasm. It is found in the cytosol. The protein localises to the nucleus. In terms of biological role, transcriptional coactivator of POU2F3. This complex drives the development of tuft cells, a rare chemosensory cells that coordinate immune and neural functions within mucosal epithelial tissues. The chain is POU domain class 2-associating factor 2 from Homo sapiens (Human).